A 212-amino-acid polypeptide reads, in one-letter code: Urease accessory protein UreG 2 (212 aa).

Residue 11 to 18 (GPVGSGKM) coordinates GTP.

Belongs to the SIMIBI class G3E GTPase family. UreG subfamily. Homodimer. UreD, UreF and UreG form a complex that acts as a GTP-hydrolysis-dependent molecular chaperone, activating the urease apoprotein by helping to assemble the nickel containing metallocenter of UreC. The UreE protein probably delivers the nickel.

The protein localises to the cytoplasm. Functionally, facilitates the functional incorporation of the urease nickel metallocenter. This process requires GTP hydrolysis, probably effectuated by UreG. Its function is as follows. Disrupting the ure2 operon has no effect on urease activity, or pathogen survival in BALB/c mice when inoculated by gavage, but confers slightly enhanced resistance to low pH killing in vitro. The sequence is that of Urease accessory protein UreG 2 from Brucella suis biovar 1 (strain 1330).